A 259-amino-acid polypeptide reads, in one-letter code: Hydroxyethylthiazole kinase (259 aa).

Methionine 37 lines the substrate pocket. Arginine 113 and threonine 158 together coordinate ATP. Glycine 185 serves as a coordination point for substrate.

It belongs to the Thz kinase family. Requires Mg(2+) as cofactor.

The catalysed reaction is 5-(2-hydroxyethyl)-4-methylthiazole + ATP = 4-methyl-5-(2-phosphooxyethyl)-thiazole + ADP + H(+). It functions in the pathway cofactor biosynthesis; thiamine diphosphate biosynthesis; 4-methyl-5-(2-phosphoethyl)-thiazole from 5-(2-hydroxyethyl)-4-methylthiazole: step 1/1. Catalyzes the phosphorylation of the hydroxyl group of 4-methyl-5-beta-hydroxyethylthiazole (THZ). This is Hydroxyethylthiazole kinase from Helicobacter pylori (strain ATCC 700392 / 26695) (Campylobacter pylori).